Consider the following 460-residue polypeptide: tRNA-2-methylthio-N(6)-dimethylallyladenosine synthase (460 aa).

An MTTase N-terminal domain is found at 23 to 138 (RKVYVHTFGC…LPEMVARAER (116 aa)). Residues cysteine 32, cysteine 68, cysteine 101, cysteine 176, cysteine 180, and cysteine 183 each contribute to the [4Fe-4S] cluster site. One can recognise a Radical SAM core domain in the interval 162–394 (ARGRPTAFVT…QAAQRRIAAA (233 aa)). The TRAM domain occupies 397–460 (AAELGKVVEV…GGSSLSGTPA (64 aa)).

Belongs to the methylthiotransferase family. MiaB subfamily. Monomer. The cofactor is [4Fe-4S] cluster.

Its subcellular location is the cytoplasm. It carries out the reaction N(6)-dimethylallyladenosine(37) in tRNA + (sulfur carrier)-SH + AH2 + 2 S-adenosyl-L-methionine = 2-methylsulfanyl-N(6)-dimethylallyladenosine(37) in tRNA + (sulfur carrier)-H + 5'-deoxyadenosine + L-methionine + A + S-adenosyl-L-homocysteine + 2 H(+). Its function is as follows. Catalyzes the methylthiolation of N6-(dimethylallyl)adenosine (i(6)A), leading to the formation of 2-methylthio-N6-(dimethylallyl)adenosine (ms(2)i(6)A) at position 37 in tRNAs that read codons beginning with uridine. The polypeptide is tRNA-2-methylthio-N(6)-dimethylallyladenosine synthase (Anaeromyxobacter sp. (strain Fw109-5)).